The sequence spans 311 residues: Aspartate carbamoyltransferase catalytic subunit (311 aa).

Residues arginine 59 and threonine 60 each contribute to the carbamoyl phosphate site. Position 87 (lysine 87) interacts with L-aspartate. Residues arginine 109, histidine 139, and glutamine 142 each contribute to the carbamoyl phosphate site. Residues arginine 172 and arginine 224 each contribute to the L-aspartate site. Residues alanine 265 and proline 266 each coordinate carbamoyl phosphate.

The protein belongs to the aspartate/ornithine carbamoyltransferase superfamily. ATCase family. As to quaternary structure, heterododecamer (2C3:3R2) of six catalytic PyrB chains organized as two trimers (C3), and six regulatory PyrI chains organized as three dimers (R2).

The enzyme catalyses carbamoyl phosphate + L-aspartate = N-carbamoyl-L-aspartate + phosphate + H(+). It participates in pyrimidine metabolism; UMP biosynthesis via de novo pathway; (S)-dihydroorotate from bicarbonate: step 2/3. Catalyzes the condensation of carbamoyl phosphate and aspartate to form carbamoyl aspartate and inorganic phosphate, the committed step in the de novo pyrimidine nucleotide biosynthesis pathway. This is Aspartate carbamoyltransferase catalytic subunit from Streptococcus equi subsp. equi (strain 4047).